We begin with the raw amino-acid sequence, 926 residues long: Chitin synthase-like protein 2 (926 aa).

The disordered stretch occupies residues 1 to 56; the sequence is MSFQNPSYINAKHRSFLQPKDTQDSQDLRNWVSHSSVDEETAYSSSTLSSSSSKSF. A compositionally biased stretch (low complexity) spans 44–55; sequence SSSTLSSSSSKS. The next 7 helical transmembrane spans lie at 564 to 584, 599 to 619, 641 to 661, 671 to 691, 721 to 741, 853 to 873, and 885 to 905; these read INSS…LWTT, LVFA…FLAF, LFLV…MLAM, LLFI…FCVF, LLIL…FFIF, VLVW…VFDG, and IFWS…TFIA.

This sequence belongs to the chitin synthase family.

It localises to the membrane. Plays a role in septum formation. Has no chitin synthase activity. In Schizosaccharomyces pombe (strain 972 / ATCC 24843) (Fission yeast), this protein is Chitin synthase-like protein 2 (chs2).